Here is an 84-residue protein sequence, read N- to C-terminus: Small ribosomal subunit protein bS20 (84 aa).

The interval 1-25 (MANIVSNEKTYRHTQKVRKENHAKM) is disordered.

Belongs to the bacterial ribosomal protein bS20 family.

Functionally, binds directly to 16S ribosomal RNA. The chain is Small ribosomal subunit protein bS20 from Ureaplasma urealyticum serovar 10 (strain ATCC 33699 / Western).